Consider the following 173-residue polypeptide: Galactose-6-phosphate isomerase subunit LacB (173 aa).

Belongs to the LacAB/RpiB family. Heteromultimeric protein consisting of LacA and LacB.

The catalysed reaction is aldehydo-D-galactose 6-phosphate = keto-D-tagatose 6-phosphate. Its pathway is carbohydrate metabolism; D-galactose 6-phosphate degradation; D-tagatose 6-phosphate from D-galactose 6-phosphate: step 1/1. The chain is Galactose-6-phosphate isomerase subunit LacB from Clostridium acetobutylicum (strain ATCC 824 / DSM 792 / JCM 1419 / IAM 19013 / LMG 5710 / NBRC 13948 / NRRL B-527 / VKM B-1787 / 2291 / W).